Consider the following 334-residue polypeptide: UDP-N-acetylenolpyruvoylglucosamine reductase (334 aa).

An FAD-binding PCMH-type domain is found at 16-186 (INVFAKKIII…LSVGIKLPKT (171 aa)). Arginine 162 is a catalytic residue. Residue serine 232 is the Proton donor of the active site. Glutamate 329 is an active-site residue.

Belongs to the MurB family. FAD serves as cofactor.

The protein localises to the cytoplasm. It catalyses the reaction UDP-N-acetyl-alpha-D-muramate + NADP(+) = UDP-N-acetyl-3-O-(1-carboxyvinyl)-alpha-D-glucosamine + NADPH + H(+). Its pathway is cell wall biogenesis; peptidoglycan biosynthesis. Cell wall formation. The polypeptide is UDP-N-acetylenolpyruvoylglucosamine reductase (Buchnera aphidicola subsp. Baizongia pistaciae (strain Bp)).